We begin with the raw amino-acid sequence, 94 residues long: Co-chaperonin GroES (94 aa).

It belongs to the GroES chaperonin family. Heptamer of 7 subunits arranged in a ring. Interacts with the chaperonin GroEL.

The protein localises to the cytoplasm. In terms of biological role, together with the chaperonin GroEL, plays an essential role in assisting protein folding. The GroEL-GroES system forms a nano-cage that allows encapsulation of the non-native substrate proteins and provides a physical environment optimized to promote and accelerate protein folding. GroES binds to the apical surface of the GroEL ring, thereby capping the opening of the GroEL channel. This chain is Co-chaperonin GroES, found in Staphylococcus epidermidis.